The chain runs to 74 residues: Cecropin-P3 (74 aa).

Positions 1-13 (MFLIYLLVQTAES) are cleaved as a signal peptide. Positions 45–74 (RRRSVGEEDAIPSHIEVNKFFLRKPAKEHI) are cleaved as a propeptide — removed in mature form.

This sequence belongs to the cecropin family. Expressed in the body wall, intestine, uterus and ovary.

It localises to the secreted. Functionally, has antibacterial activity against several Gram-positive and Gram-negative bacteria. Is weakly active against yeasts. Acts by a nonpore mechanism. This chain is Cecropin-P3 (ASCEC-3), found in Ascaris suum (Pig roundworm).